The sequence spans 311 residues: Phosphopantothenate--cysteine ligase (311 aa).

The residue at position 2 (A2) is an N-acetylalanine.

This sequence belongs to the PPC synthetase family. As to quaternary structure, homodimer.

The catalysed reaction is (R)-4'-phosphopantothenate + L-cysteine + ATP = N-[(R)-4-phosphopantothenoyl]-L-cysteine + AMP + diphosphate + H(+). The enzyme catalyses (R)-4'-phosphopantothenate + L-cysteine + CTP = N-[(R)-4-phosphopantothenoyl]-L-cysteine + CMP + diphosphate + H(+). It participates in cofactor biosynthesis; coenzyme A biosynthesis; CoA from (R)-pantothenate: step 2/5. Its function is as follows. Catalyzes the second step in the biosynthesis of coenzyme A from vitamin B5, where cysteine is conjugated to 4'-phosphopantothenate to form 4-phosphopantothenoylcysteine. Has a preference for ATP over CTP as a cosubstrate. This Mus musculus (Mouse) protein is Phosphopantothenate--cysteine ligase (Ppcs).